The sequence spans 199 residues: Large ribosomal subunit protein bL25 (199 aa).

Belongs to the bacterial ribosomal protein bL25 family. CTC subfamily. In terms of assembly, part of the 50S ribosomal subunit; part of the 5S rRNA/L5/L18/L25 subcomplex. Contacts the 5S rRNA. Binds to the 5S rRNA independently of L5 and L18.

Functionally, this is one of the proteins that binds to the 5S RNA in the ribosome where it forms part of the central protuberance. This is Large ribosomal subunit protein bL25 from Herpetosiphon aurantiacus (strain ATCC 23779 / DSM 785 / 114-95).